A 432-amino-acid polypeptide reads, in one-letter code: MGKPGGAKTRTAVCLSDGVFFLAGAFMSLTLVWSYFSIFSPSFTSLRHDGKPVQCSGLDMQFDPSEPGFYDDPDLSYSIEKPITKWDEKRNQWFESHPSFKPGSENRIVMVTGSQSSPCKNPIGDHLLLRCFKNKVDYARIHGHDIFYSNSLLHPKMNSYWAKLPVVKAAMLAHPEAEWIWWVDSDAIFTDMEFKPPLHRYRQHNLVVHGWPNIIYEKQSWTALNAGVFLIRNCQWSMDLIDTWKSMGPVSPDYKKWGPIQRSIFKDKLFPESDDQTALIYLLYKHKELYYPKIYLEAEYYLQGYWIGVFGDFANVTERYLEMEREDDTLRRRHAEKVSERYGAFREERFLKGEFGGRGSRRRAFITHFTGCQPCSGDHNPSYDGDTCWNEMIRALNFADNQVMRVYGYVHSDLSKTSPLQPLPFDYPNEAW.

At 1–18 (MGKPGGAKTRTAVCLSDG) the chain is on the cytoplasmic side. Residues 19 to 39 (VFFLAGAFMSLTLVWSYFSIF) traverse the membrane as a helical; Signal-anchor for type II membrane protein segment. Over 40-432 (SPSFTSLRHD…LPFDYPNEAW (393 aa)) the chain is Lumenal. Asparagine 315 is a glycosylation site (N-linked (GlcNAc...) asparagine).

It belongs to the glycosyltransferase 34 family.

It is found in the golgi apparatus membrane. Probable glycosyltransferase that may be involved in the biosynthesis of xyloglucan. This chain is Glycosyltransferase 6 (GT6), found in Arabidopsis thaliana (Mouse-ear cress).